Consider the following 189-residue polypeptide: GTPase NRas (189 aa).

GTP is bound by residues 10 to 18 and 29 to 30; these read GAGGVGKSA and VD. The Effector region motif lies at 32-40; it reads YDPTIEDSY. 57–61 serves as a coordination point for GTP; sequence DTAGQ. The residue at position 89 (serine 89) is a Phosphoserine. GTP is bound at residue 116-119; it reads NKCD. Residues 166-185 are hypervariable region; the sequence is YRMKKLNSSEDGTQGCMGLP. A Glycyl lysine isopeptide (Lys-Gly) (interchain with G-Cter in ubiquitin) cross-link involves residue lysine 170. A lipid anchor (S-palmitoyl cysteine) is attached at cysteine 181. Residue cysteine 186 is the site of S-farnesyl cysteine attachment. The propeptide at 187-189 is removed in mature form; the sequence is VVM.

It belongs to the small GTPase superfamily. Ras family. As to quaternary structure, interacts (active GTP-bound form preferentially) with RGS14. Interacts (active GTP-bound form) with RASSF7. Interacts (active GTP-bound form) with both SHOC2 and PP1c (all isoforms) to form a tertiary complex; SHOC2 and PP1c preferably bind M-Ras/MRAS, but they also bind K-Ras/KRAS, N-Ras/NRAS and H-Ras/HRAS. Palmitoylated by the ZDHHC9-GOLGA7 complex. Depalmitoylated by ABHD17A, ABHD17B and ABHD17C. A continuous cycle of de- and re-palmitoylation regulates rapid exchange between plasma membrane and Golgi. In terms of processing, acetylation at Lys-104 prevents interaction with guanine nucleotide exchange factors (GEFs). Post-translationally, ubiquitinated by the BCR(LZTR1) E3 ubiquitin ligase complex at Lys-170 in a non-degradative manner, leading to inhibit Ras signaling by decreasing Ras association with membranes. Phosphorylation at Ser-89 enhances NRAS association with its downstream effectors.

It localises to the cell membrane. It is found in the golgi apparatus membrane. It carries out the reaction GTP + H2O = GDP + phosphate + H(+). Its activity is regulated as follows. Alternates between an inactive form bound to GDP and an active form bound to GTP. Activated by a guanine nucleotide-exchange factor (GEF) and inactivated by a GTPase-activating protein (GAP). Its function is as follows. Ras proteins bind GDP/GTP and possess intrinsic GTPase activity. The protein is GTPase NRas (Nras) of Rattus norvegicus (Rat).